The following is a 483-amino-acid chain: Protein adenylyltransferase Fic (483 aa).

A helical membrane pass occupies residues 20-42 (AFFFIAGSLATFVFHALTSSSSV). TPR repeat units lie at residues 107–140 (ALGA…APKH) and 141–175 (PEVL…SPSN). The short motif at 232 to 237 (SVGIEG) is the Inhibitory (S/T)XXXE(G/N) motif element. ATP contacts are provided by residues Glu236 and 317–320 (VGGH). A Fido domain is found at 286–421 (ITLKDILELH…IRPFVRFIAD (136 aa)). The active site involves His364. Residues 368-375 (DGNGRTSR), 400-401 (YY), and Asn408 contribute to the ATP site. The interval 464 to 483 (SAPEPYESGSGLDSGVNGMP) is disordered.

The protein belongs to the fic family. Homodimer.

The protein resides in the membrane. It catalyses the reaction L-tyrosyl-[protein] + ATP = O-(5'-adenylyl)-L-tyrosyl-[protein] + diphosphate. It carries out the reaction L-threonyl-[protein] + ATP = 3-O-(5'-adenylyl)-L-threonyl-[protein] + diphosphate. The catalysed reaction is 3-O-(5'-adenylyl)-L-threonyl-[protein] + H2O = L-threonyl-[protein] + AMP + H(+). The side chain of Glu-236 determines which of the two opposing activities (AMPylase or de-AMPylase) will take place. In response to endoplasmic reticulum stress, mediates de-AMPylase activity. Adenylyltransferase activity is inhibited by the inhibitory helix present at the N-terminus: Glu-236 binds ATP and competes with ATP-binding at Arg-375, thereby preventing adenylyltransferase activity. In unstressed cells, disengagement of Glu-236 promotes adenylyltransferase activity. Activation dissociates ATP-binding from Glu-236, allowing ordered binding of the entire ATP moiety with the alpha-phosphate in an orientation that is productive for accepting an incoming target hydroxyl side chain. Its function is as follows. Protein that can both mediate the addition of adenosine 5'-monophosphate (AMP) to specific residues of target proteins (AMPylation), and the removal of the same modification from target proteins (de-AMPylation), depending on the context. The side chain of Glu-236 determines which of the two opposing activities (AMPylase or de-AMPylase) will take place. Acts as a key regulator of the unfolded protein response (UPR) by mediating AMPylation or de-AMPylation of Hsc70-3/BiP. In unstressed cells, acts as an adenylyltransferase by mediating AMPylation of Hsc70-3/BiP at 'Thr-518', thereby inactivating it. In response to endoplasmic reticulum stress, acts as a phosphodiesterase by mediating removal of ATP (de-AMPylation) from Hsc70-3/BiP at 'Thr-518', leading to restore HSPA5/BiP activity. This chain is Protein adenylyltransferase Fic, found in Drosophila grimshawi (Hawaiian fruit fly).